Reading from the N-terminus, the 144-residue chain is Prefoldin subunit alpha (144 aa).

It belongs to the prefoldin alpha subunit family. As to quaternary structure, heterohexamer of two alpha and four beta subunits.

It localises to the cytoplasm. In terms of biological role, molecular chaperone capable of stabilizing a range of proteins. Seems to fulfill an ATP-independent, HSP70-like function in archaeal de novo protein folding. The polypeptide is Prefoldin subunit alpha (Metallosphaera sedula (strain ATCC 51363 / DSM 5348 / JCM 9185 / NBRC 15509 / TH2)).